The following is a 547-amino-acid chain: MADTKQDMENSEDGRKLVKMSSLKQKAISASNRFKNSFKKKTRRTSSKIVSVANTDDINGDDYLSVEAFRQVLVLDDLLPPKHDDLHMMLRFLRARKFDKEKAKQMWSDMLQWRMDFGVDTIIEDFEFEEIDQVLKHYPQGYHGVDKEGRPVYIERLGQIDANKLLQATTMDRYEKYHVKEFEKMFKIKFPSCSAAAKKHIDQSTTIFDVQGVGLKNFNKSARELLQRLLKIDNDNYPETLNRMFIINAGPGFRLLWAPIKKFLDPKTTSKIHVLGNKYQPKLLEAIDASELPYFFGGLCTCADKGGCLRSDKGPWNDPELLKIARNPEARFSTISEEDYLLVEEGTSMSMVFEPLERNKMKTIEENVSEKHIDAVDKFMALSLPPKPHLKTLRKGKEPQKKDDSFLVGGVIAFVMGIVAMLRLSKAVPRKLTDVALLTNSVYYEEAKMSKPNQDEVSAPPVSSSEYVIMVKRMAELEEKYKSLDSKSADEALEKDDKLQAALNRVQVLEHELSETKKALDETMVNQQGILAYIEKKNKKKRMFFRF.

Residues 130-304 (EIDQVLKHYP…FFGGLCTCAD (175 aa)) form the CRAL-TRIO domain. Residues 464–526 (SSEYVIMVKR…KKALDETMVN (63 aa)) are a coiled coil.

This sequence belongs to the SFH family.

The protein localises to the golgi apparatus membrane. Its subcellular location is the cell membrane. Functionally, required for transport of secretory proteins from the Golgi complex. Catalyzes the transfer of phosphatidylinositol and phosphatidylcholine between membranes in vitro. The protein is Phosphatidylinositol/phosphatidylcholine transfer protein SFH7 (SFH7) of Arabidopsis thaliana (Mouse-ear cress).